The chain runs to 542 residues: MGNQCQNGTLGSDYHNRFPREHAVGYVQGDSYLDLKKFDDTWPEVNNFKPTAASILRRGLDPTSINVLGRKTADLREHYIIGRKLGQGQFGTTYLCTEINTGCEYACKTIPKRKLITKEDVEDVRREIQIMHHLSGHKNVVAIKDVYEDGQAVHIVMELCAGGELFDRIQEKGHYSERKAAELIRIIVSIVAMCHSLGVMHRDLKPENFLLLDKDDDLSIKAIDFGLSVFFKPGQVFTELVGSPYYVAPEVLHKRYGPESDVWSAGVILYVLLSGVPPFWAETQQGIFDAVLKGHIDFQSDPWPKISDSAKDLIRKMLSHCPSERLKAHEVLRHPWICENGVATDQALDPSVISRLKQFSAMNKLKKLALRVIAERLSEEEIAGLREMFKAVDTKNRGVITFGELREGLRRFGAEFKDTEIGDIMEAAHNDNNVTIHYEEFIAATLPLNKIEREEHLLAAFTYFDKDGSGYITVDKLQRACGEHNMEDSLLEEIISEVDQNNDGQIDYAEFVAMMQGSNVGLGWQTMESSLNVALRDAPQVH.

Residue glycine 2 is the site of N-myristoyl glycine attachment. In terms of domain architecture, Protein kinase spans 79 to 337 (YIIGRKLGQG…AHEVLRHPWI (259 aa)). ATP contacts are provided by residues 85–93 (LGQGQFGTT) and lysine 108. Aspartate 203 acts as the Proton acceptor in catalysis. Residues 343–373 (ATDQALDPSVISRLKQFSAMNKLKKLALRVI) form an autoinhibitory domain region. The EF-hand 1 domain occupies 380-415 (EEIAGLREMFKAVDTKNRGVITFGELREGLRRFGAE). Ca(2+) contacts are provided by aspartate 393, glutamate 404, aspartate 431, asparagine 433, threonine 435, glutamate 440, aspartate 465, aspartate 467, serine 469, tyrosine 471, lysine 476, aspartate 499, asparagine 501, aspartate 503, glutamine 505, and glutamate 510. Residues 416 to 451 (FKDTEIGDIMEAAHNDNNVTIHYEEFIAATLPLNKI) form the EF-hand 2; degenerate domain. EF-hand domains follow at residues 452–487 (EREEHLLAAFTYFDKDGSGYITVDKLQRACGEHNME) and 488–521 (DSLLEEIISEVDQNNDGQIDYAEFVAMMQGSNVG).

The protein belongs to the protein kinase superfamily. Ser/Thr protein kinase family. CDPK subfamily. As to expression, expressed in roots. Expressed in leaf sheaths.

Its subcellular location is the membrane. The protein localises to the cytoplasm. The protein resides in the cytosol. The catalysed reaction is L-seryl-[protein] + ATP = O-phospho-L-seryl-[protein] + ADP + H(+). It catalyses the reaction L-threonyl-[protein] + ATP = O-phospho-L-threonyl-[protein] + ADP + H(+). Its activity is regulated as follows. Activated by calcium. Autophosphorylation may play an important role in the regulation of the kinase activity. Its function is as follows. May play a role in signal transduction pathways that involve calcium as a second messenger. May be a signaling component in the response to gibberellin and cold stress. The polypeptide is Calcium-dependent protein kinase 7 (Oryza sativa subsp. japonica (Rice)).